The primary structure comprises 213 residues: 5-oxoprolinase subunit B (213 aa).

The protein belongs to the PxpB family. Forms a complex composed of PxpA, PxpB and PxpC.

It catalyses the reaction 5-oxo-L-proline + ATP + 2 H2O = L-glutamate + ADP + phosphate + H(+). Its function is as follows. Catalyzes the cleavage of 5-oxoproline to form L-glutamate coupled to the hydrolysis of ATP to ADP and inorganic phosphate. This chain is 5-oxoprolinase subunit B, found in Haemophilus influenzae (strain ATCC 51907 / DSM 11121 / KW20 / Rd).